The chain runs to 195 residues: Probable GTP-binding protein EngB (195 aa).

Residues 24-195 (GLSEVALSGR…QIWDLIANYL (172 aa)) enclose the EngB-type G domain. GTP is bound by residues 32-39 (GRSNVGKS), 59-63 (GKTQT), 77-80 (DVPG), 144-147 (TKED), and 176-178 (YSS). Mg(2+) is bound by residues Ser39 and Thr61.

The protein belongs to the TRAFAC class TrmE-Era-EngA-EngB-Septin-like GTPase superfamily. EngB GTPase family. Mg(2+) is required as a cofactor.

In terms of biological role, necessary for normal cell division and for the maintenance of normal septation. In Staphylococcus haemolyticus (strain JCSC1435), this protein is Probable GTP-binding protein EngB.